Reading from the N-terminus, the 342-residue chain is Large ribosomal subunit protein uL3 (342 aa).

Residues 1-22 (MGHRKLSSPRRGSAGLRPRKRA) form a disordered region.

It belongs to the universal ribosomal protein uL3 family. In terms of assembly, part of the 50S ribosomal subunit. Forms a cluster with proteins L14 and L24e.

Its function is as follows. One of the primary rRNA binding proteins, it binds directly near the 3'-end of the 23S rRNA, where it nucleates assembly of the 50S subunit. The sequence is that of Large ribosomal subunit protein uL3 from Sulfolobus acidocaldarius (strain ATCC 33909 / DSM 639 / JCM 8929 / NBRC 15157 / NCIMB 11770).